Here is a 446-residue protein sequence, read N- to C-terminus: Probable glucan endo-1,3-beta-glucosidase eglC (446 aa).

A signal peptide spans 1–18 (MQFTHLVALALALATSEA). Residue Glu-128 is the Proton donor of the active site. Asn-183 is a glycosylation site (N-linked (GlcNAc...) asparagine). Glu-239 functions as the Nucleophile in the catalytic mechanism. 2 N-linked (GlcNAc...) asparagine glycosylation sites follow: Asn-364 and Asn-370. A disordered region spans residues 393 to 416 (SSGAGASGASGQSSSSTGSSSAPS). The segment covering 401-416 (ASGQSSSSTGSSSAPS) has biased composition (low complexity). The GPI-anchor amidated asparagine moiety is linked to residue Asn-423. A propeptide spans 424 to 446 (AASGLSGSIFGAVVAVCLALAAL) (removed in mature form).

The protein belongs to the glycosyl hydrolase 17 family. Post-translationally, the GPI-anchor is attached to the protein in the endoplasmic reticulum and serves to target the protein to the cell surface. There, the glucosamine-inositol phospholipid moiety is cleaved off and the GPI-modified mannoprotein is covalently attached via its lipidless GPI glycan remnant to the 1,6-beta-glucan of the outer cell wall layer.

It localises to the cell membrane. Its subcellular location is the secreted. It is found in the cell wall. The catalysed reaction is Hydrolysis of (1-&gt;3)-beta-D-glucosidic linkages in (1-&gt;3)-beta-D-glucans.. Glucanases play a role in cell expansion during growth, in cell-cell fusion during mating, and in spore release during sporulation. This enzyme may be involved in beta-glucan degradation and also function biosynthetically as a transglycosylase. The protein is Probable glucan endo-1,3-beta-glucosidase eglC (eglC) of Aspergillus fumigatus (strain ATCC MYA-4609 / CBS 101355 / FGSC A1100 / Af293) (Neosartorya fumigata).